The sequence spans 235 residues: Pyridoxine 5'-phosphate synthase (235 aa).

Position 6 (Asn6) interacts with 3-amino-2-oxopropyl phosphate. 8–9 is a 1-deoxy-D-xylulose 5-phosphate binding site; sequence DH. Residue Arg17 coordinates 3-amino-2-oxopropyl phosphate. His42 acts as the Proton acceptor in catalysis. 1-deoxy-D-xylulose 5-phosphate-binding residues include Arg44 and His49. The active-site Proton acceptor is Glu69. Thr99 contributes to the 1-deoxy-D-xylulose 5-phosphate binding site. His188 acts as the Proton donor in catalysis. 3-amino-2-oxopropyl phosphate contacts are provided by residues Gly189 and 210 to 211; that span reads GH.

It belongs to the PNP synthase family. In terms of assembly, homooctamer; tetramer of dimers.

The protein localises to the cytoplasm. It carries out the reaction 3-amino-2-oxopropyl phosphate + 1-deoxy-D-xylulose 5-phosphate = pyridoxine 5'-phosphate + phosphate + 2 H2O + H(+). The protein operates within cofactor biosynthesis; pyridoxine 5'-phosphate biosynthesis; pyridoxine 5'-phosphate from D-erythrose 4-phosphate: step 5/5. Functionally, catalyzes the complicated ring closure reaction between the two acyclic compounds 1-deoxy-D-xylulose-5-phosphate (DXP) and 3-amino-2-oxopropyl phosphate (1-amino-acetone-3-phosphate or AAP) to form pyridoxine 5'-phosphate (PNP) and inorganic phosphate. This is Pyridoxine 5'-phosphate synthase from Wolbachia pipientis subsp. Culex pipiens (strain wPip).